Consider the following 144-residue polypeptide: Nucleoside diphosphate kinase (144 aa).

ATP is bound by residues Lys-9, Phe-57, Arg-85, Thr-91, Arg-102, and Asn-112. His-120 (pros-phosphohistidine intermediate) is an active-site residue.

This sequence belongs to the NDK family. In terms of assembly, homotetramer. Mg(2+) is required as a cofactor.

It is found in the cytoplasm. It catalyses the reaction a 2'-deoxyribonucleoside 5'-diphosphate + ATP = a 2'-deoxyribonucleoside 5'-triphosphate + ADP. The enzyme catalyses a ribonucleoside 5'-diphosphate + ATP = a ribonucleoside 5'-triphosphate + ADP. In terms of biological role, major role in the synthesis of nucleoside triphosphates other than ATP. The ATP gamma phosphate is transferred to the NDP beta phosphate via a ping-pong mechanism, using a phosphorylated active-site intermediate. This chain is Nucleoside diphosphate kinase, found in Streptococcus uberis (strain ATCC BAA-854 / 0140J).